The following is a 388-amino-acid chain: LIM/homeobox protein Lhx9 (388 aa).

2 consecutive LIM zinc-binding domains span residues 69 to 130 (ISDR…CHLG) and 131 to 193 (ISAS…LSYT). Disordered regions lie at residues 239–263 (ENEA…RMRT), 321–356 (ENGG…LTDL), and 369–388 (SNMD…TNLF). The homeobox DNA-binding region spans 267 to 326 (HHQLRTMKSYFAINHNPDAKDLKQLAQKTGLTKRVLQVWFQNARAKFRRNLLRQENGGVD). The segment covering 344 to 356 (LTPPGTATTLTDL) has biased composition (low complexity). The segment covering 376 to 388 (SGSPSQTTLTNLF) has biased composition (polar residues).

In terms of assembly, interacts with LDB1 and LDB2.

The protein resides in the nucleus. Functionally, involved in gonadal development. This Rattus norvegicus (Rat) protein is LIM/homeobox protein Lhx9 (Lhx9).